The primary structure comprises 491 residues: MPERPPIRALRRDPDDPAVAQALASLARGSDLVFPSRFQKWLRDFRQVHAHRKEEPPPQSPPPGHTVPAFYFPCGRPPPRPQDTEDAIALVECAFEGLPRGRAGLGDMAVVAKACGCPLYWKAPLFYAAGGERTGSVSVHMFVAMWRKVLLTCHDDAARFVRLLGHPGCSGLIQEDFVPFLQDVVNSHPGLAFLRAAKDFHSRYITTVIQRIFYTVNRSWSGMISREELRRSSFLQAVSQLEVEPDINRMTSFFSYEHFYVIYCKFWELDLDRDLTIDRSDLARHGDGAISSRMIDRIFSGAVTRARLPRKVGKLSYADFVWFLLSEEDKTTPTSTEYWFRCMDLDGDGALSMFELEFFYEEQAQRMAARGVEPLPFHDLARQVLDLVAPRCPGRITLRDLKQCGLAGEFFDAFFNVDKYLAREQREQAGTPQDTDSDPAASAWDRYAAEEYDFLVAEEAMAEDDDDHDEGSDPIDLYGLADEDCDDLEPL.

An EF-hand domain is found at 331–366 (TTPTSTEYWFRCMDLDGDGALSMFELEFFYEEQAQR). The Ca(2+) site is built by aspartate 344, aspartate 346, aspartate 348, and glutamate 355. Composition is skewed to acidic residues over residues 460–473 (AMAEDDDDHDEGSD) and 481–491 (ADEDCDDLEPL). The segment at 460–491 (AMAEDDDDHDEGSDPIDLYGLADEDCDDLEPL) is disordered.

As to quaternary structure, PP2A consists of a common heterodimeric core enzyme, composed of a 36 kDa catalytic subunit (subunit C) and a 65 kDa constant regulatory subunit (PR65 or subunit A), that associates with a variety of regulatory subunits. Proteins that associate with the core dimer include three families of regulatory subunits B (the R2/B/PR55/B55, R3/B''/PR72/PR130/PR59 and R5/B'/B56 families), the 48 kDa variable regulatory subunit, viral proteins, and cell signaling molecules. As to expression, expressed in testis, kidney, liver, lung, spleen, brain and heart.

The B regulatory subunit might modulate substrate selectivity and catalytic activity, and might also direct the localization of the catalytic enzyme to a particular subcellular compartment. Interacts with retinoblastoma-related protein p107 (in vivo). May target PP2A core dimer to p107 resulting in dephosphorylation of p107. This chain is Serine/threonine-protein phosphatase 2A regulatory subunit B'' subunit delta (Ppp2r3d), found in Mus musculus (Mouse).